A 546-amino-acid chain; its full sequence is CTP synthase (546 aa).

Residues 1–265 are amidoligase domain; the sequence is MTKYVFVTGG…DEIVCHKLNI (265 aa). Serine 13 lines the CTP pocket. Serine 13 serves as a coordination point for UTP. ATP contacts are provided by residues 14 to 19 and aspartate 71; that span reads SLGKGI. Mg(2+)-binding residues include aspartate 71 and glutamate 139. CTP contacts are provided by residues 146-148, 186-191, and lysine 222; these read DIE and KTKPTQ. UTP contacts are provided by residues 186 to 191 and lysine 222; that span reads KTKPTQ. Residues 290–543 enclose the Glutamine amidotransferase type-1 domain; the sequence is KIAFVGKYVD…VKAALANQKA (254 aa). L-glutamine is bound at residue glycine 351. The Nucleophile; for glutamine hydrolysis role is filled by cysteine 378. L-glutamine contacts are provided by residues 379-382, glutamate 402, and arginine 469; that span reads LGMQ. Active-site residues include histidine 516 and glutamate 518.

Belongs to the CTP synthase family. In terms of assembly, homotetramer.

The enzyme catalyses UTP + L-glutamine + ATP + H2O = CTP + L-glutamate + ADP + phosphate + 2 H(+). It catalyses the reaction L-glutamine + H2O = L-glutamate + NH4(+). It carries out the reaction UTP + NH4(+) + ATP = CTP + ADP + phosphate + 2 H(+). It functions in the pathway pyrimidine metabolism; CTP biosynthesis via de novo pathway; CTP from UDP: step 2/2. Its activity is regulated as follows. Allosterically activated by GTP, when glutamine is the substrate; GTP has no effect on the reaction when ammonia is the substrate. The allosteric effector GTP functions by stabilizing the protein conformation that binds the tetrahedral intermediate(s) formed during glutamine hydrolysis. Inhibited by the product CTP, via allosteric rather than competitive inhibition. Functionally, catalyzes the ATP-dependent amination of UTP to CTP with either L-glutamine or ammonia as the source of nitrogen. Regulates intracellular CTP levels through interactions with the four ribonucleotide triphosphates. The protein is CTP synthase of Dechloromonas aromatica (strain RCB).